Reading from the N-terminus, the 208-residue chain is Thymidylate kinase (208 aa).

10–17 (GPEGSGKT) serves as a coordination point for ATP.

This sequence belongs to the thymidylate kinase family.

The catalysed reaction is dTMP + ATP = dTDP + ADP. In terms of biological role, phosphorylation of dTMP to form dTDP in both de novo and salvage pathways of dTTP synthesis. The polypeptide is Thymidylate kinase (Bacillus cereus (strain 03BB102)).